A 254-amino-acid polypeptide reads, in one-letter code: Ribosomal RNA large subunit methyltransferase E (254 aa).

Residues 1 to 18 (MTNSGKTGGKSGKGGTGG) show a composition bias toward gly residues. The disordered stretch occupies residues 1-26 (MTNSGKTGGKSGKGGTGGARALKVRV). Residues Gly-89, Trp-91, Asp-119, Asp-135, and Asp-159 each coordinate S-adenosyl-L-methionine. The active-site Proton acceptor is Lys-199.

Belongs to the class I-like SAM-binding methyltransferase superfamily. RNA methyltransferase RlmE family.

The protein localises to the cytoplasm. The catalysed reaction is uridine(2552) in 23S rRNA + S-adenosyl-L-methionine = 2'-O-methyluridine(2552) in 23S rRNA + S-adenosyl-L-homocysteine + H(+). Specifically methylates the uridine in position 2552 of 23S rRNA at the 2'-O position of the ribose in the fully assembled 50S ribosomal subunit. The protein is Ribosomal RNA large subunit methyltransferase E of Parvibaculum lavamentivorans (strain DS-1 / DSM 13023 / NCIMB 13966).